Consider the following 429-residue polypeptide: MKKQRNLRSMAAQAVEQVVEQGQSLSNILPPLQQKVSDKDKALLQELCFGVLRTLSQLDWLINKLMARPMTGKQRTVHYLIMVGLYQLLYTRIPPHAALAETVEGAIAIKRPQLKGLINGVLRQFQRRQEELLAEFNTRDARYLHPSWLLKRLQKAYPEQWQSIAEANNQRPPMWLRINRTHHSRDSWLALLDEAGMKGFPHADYPDAVRLETPAPVHALPGFEDGWVTVQDASAQGCMTWLAPQNGEHILDLCAAPGGKTTHILEVAPEAQVVAVDIDEQRLSRIYDNLKRLGMKATVKQGDGRYPSQWCGEQQFDRILLDAPCSATGVIRRHPDIKWLRRDRDIPELAQLQSEILDAIWPHLKSGGTLVYATCSVLPEENSLQIKAFLQRTADAELCETGTPEQPGKQNQPGAEEGDGFFYAKLIKK.

S-adenosyl-L-methionine is bound by residues Cys254 to Lys260, Asp277, Asp303, and Asp322. Cys375 (nucleophile) is an active-site residue.

The protein belongs to the class I-like SAM-binding methyltransferase superfamily. RsmB/NOP family.

It is found in the cytoplasm. The enzyme catalyses cytidine(967) in 16S rRNA + S-adenosyl-L-methionine = 5-methylcytidine(967) in 16S rRNA + S-adenosyl-L-homocysteine + H(+). In terms of biological role, specifically methylates the cytosine at position 967 (m5C967) of 16S rRNA. The sequence is that of Ribosomal RNA small subunit methyltransferase B from Shigella flexneri.